The primary structure comprises 420 residues: Meiotically up-regulated gene 137 protein (420 aa).

Positions 10–232 (NEKPLGDQRA…QNSLTPQKKI (223 aa)) constitute a BAR domain. In terms of domain architecture, SH3 spans 279 to 345 (KETVFVKAIY…PVNYCTRIYD (67 aa)). The disordered stretch occupies residues 398-420 (SQNVEASSQPIKIRKPLPEIPNK).

The protein localises to the cytoplasm. It localises to the nucleus. Functionally, has a role in meiosis and sporulation. The chain is Meiotically up-regulated gene 137 protein (mug137) from Schizosaccharomyces pombe (strain 972 / ATCC 24843) (Fission yeast).